A 341-amino-acid chain; its full sequence is 2-acylglycerol O-acyltransferase 3 (341 aa).

Helical transmembrane passes span 29–49 and 50–70; these read YVLT…VLLF and TSLW…WDTP. N-linked (GlcNAc...) asparagine glycosylation is present at asparagine 126. The helical transmembrane segment at 137–157 threads the bilayer; it reads LFPGLRPWLAVLAGLFYLPVY.

The protein belongs to the diacylglycerol acyltransferase family. Ubiquitinated. Ubiquitination leads to proteasomal degradation. Selectively expressed in the digestive system. Highly expressed in the ileum, and at lower level in jejunum, duodenum, colon, cecum and the rectum. Not expressed in the stomach and the esophagus and trachea. Expressed at very low level in liver.

It is found in the endoplasmic reticulum membrane. Its subcellular location is the cytoplasm. The protein localises to the perinuclear region. It catalyses the reaction a 2-acylglycerol + an acyl-CoA = a 1,2-diacylglycerol + CoA. The catalysed reaction is an acyl-CoA + a 1,2-diacyl-sn-glycerol = a triacyl-sn-glycerol + CoA. It carries out the reaction 2-(9Z-octadecenoyl)-glycerol + (9Z)-octadecenoyl-CoA = 1,2-di-(9Z-octadecenoyl)-sn-glycerol + CoA. The enzyme catalyses 2-(9Z-octadecenoyl)-glycerol + hexadecanoyl-CoA = 1-hexadecanoyl-2-(9Z-octadecenoyl)-sn-glycerol + CoA. It catalyses the reaction 1,2-di-(9Z-octadecenoyl)-sn-glycerol + (9Z)-octadecenoyl-CoA = 1,2,3-tri-(9Z-octadecenoyl)-glycerol + CoA. The catalysed reaction is 1-hexadecanoyl-2-(9Z-octadecenoyl)-sn-glycerol + hexadecanoyl-CoA = 1,3-dihexadecanoyl-2-(9Z-octadecenoyl)glycerol + CoA. It carries out the reaction all-trans-retinol + hexadecanoyl-CoA = all-trans-retinyl hexadecanoate + CoA. The enzyme catalyses 1-O-(9Z-octadecenyl)-glycerol + (9Z)-octadecenoyl-CoA = 1-O-(9Z-octadecyl)-3-(9Z-octadecenoyl)-glycerol + CoA. It catalyses the reaction 1-O-(9Z-octadecyl)-3-(9Z-octadecenoyl)-glycerol + (9Z)-octadecenoyl-CoA = 1-O-(9Z-octadecenyl)-2,3-di-(9Z-octadecenoyl)glycerol + CoA. It participates in glycerolipid metabolism; triacylglycerol biosynthesis. In terms of biological role, catalyzes the formation of diacylglycerol from 2-monoacylglycerol and fatty acyl-CoA. Also able to catalyze the terminal step in triacylglycerol synthesis by using diacylglycerol and fatty acyl-CoA as substrates. Has a preference toward palmitoyl-CoA and oleoyl-CoA. May be involved in absorption of dietary fat in the small intestine by catalyzing the resynthesis of triacylglycerol in enterocytes. Also able to use 1-monoalkylglycerol (1-MAkG) as an acyl acceptor for the synthesis of monoalkyl-monoacylglycerol (MAMAG). This chain is 2-acylglycerol O-acyltransferase 3, found in Homo sapiens (Human).